Consider the following 60-residue polypeptide: Small ribosomal subunit protein bS21 (60 aa).

The disordered stretch occupies residues 36 to 60; sequence QFFETPQEKHKRKEATRRRQRSRRR. Over residues 44-60 the composition is skewed to basic residues; that stretch reads KHKRKEATRRRQRSRRR.

This sequence belongs to the bacterial ribosomal protein bS21 family.

In Synechocystis sp. (strain ATCC 27184 / PCC 6803 / Kazusa), this protein is Small ribosomal subunit protein bS21 (rpsU).